Consider the following 204-residue polypeptide: High frequency lysogenization protein HflD homolog (204 aa).

This sequence belongs to the HflD family.

The protein localises to the cytoplasm. It is found in the cell inner membrane. This is High frequency lysogenization protein HflD homolog from Aeromonas hydrophila subsp. hydrophila (strain ATCC 7966 / DSM 30187 / BCRC 13018 / CCUG 14551 / JCM 1027 / KCTC 2358 / NCIMB 9240 / NCTC 8049).